We begin with the raw amino-acid sequence, 227 residues long: MVMYGENVPVHKKFVQYGMLKTELDEYLEEELGRAGYGGMRLQRVPNATKIIAYVERPAIAIGRRGRNIRRVEEEVQERFPLLGRVSIEVKELPSPELNPRVVARRLASALERGIHFRRAAYGALRRIMNAGAKGAMIILSGKLIGARARTEKFMEGAVKYCGEPGDEYMIEGYVQAVTKPGAIGVTVRIMPPDVELPDELEIRPPEEVEDELKELIGKSEDEAEGA.

The KH type-2 domain occupies L24–P94. Residues E207–A227 are disordered.

It belongs to the universal ribosomal protein uS3 family. Part of the 30S ribosomal subunit.

Its function is as follows. Binds the lower part of the 30S subunit head. This is Small ribosomal subunit protein uS3 from Methanopyrus kandleri (strain AV19 / DSM 6324 / JCM 9639 / NBRC 100938).